Reading from the N-terminus, the 273-residue chain is Rho GTPase-activating protein gacB (273 aa).

Residues Met-1–Phe-192 form the Rho-GAP domain.

Its subcellular location is the cytoplasm. Functionally, rho GTPase-activating protein involved in the signal transduction pathway. The sequence is that of Rho GTPase-activating protein gacB (gacB) from Dictyostelium discoideum (Social amoeba).